A 118-amino-acid chain; its full sequence is Large ribosomal subunit protein bL19 (118 aa).

Belongs to the bacterial ribosomal protein bL19 family.

Its function is as follows. This protein is located at the 30S-50S ribosomal subunit interface and may play a role in the structure and function of the aminoacyl-tRNA binding site. This chain is Large ribosomal subunit protein bL19, found in Salinispora arenicola (strain CNS-205).